An 880-amino-acid chain; its full sequence is MAYRKRGARREANINNNDRMQEKDDEKQDQNNRMQLSDKVLSKKEEVVTDNQEEIKIADEVKKSTKEESKQLLEVLKTKEEHQKEIQYEILQKTIPTFEPKESILKKLEDIKPEQAKKQTKLFRIFEPRQLPIYRANGEKELRNRWYWKLKKDTLPDGDYDVREYFLNLYDQVLTEMPDYLLLKDMAVENKNSRDAGKVVDSETASICDAIFQDEETEGAVRRFIAEMRQRVQADRNVVNYPSILHPIDYAFNEYFLQHQLVEPLNNDIIFNYIPERIRNDVNYILNMDRNLPSTARYIRPNLLQDRLNLHDNFESLWDTITTSNYILARSVVPDLKELVSTEAQIQKMSQDLQLEALTIQSETQFLTGINSQAANDCFKTLIAAMLSQRTMSLDFVTTNYMSLISGMWLLTVVPNDMFIRESLVACQLAIVNTIIYPAFGMQRMHYRNGDPQTPFQIAEQQIQNFQVANWLHFVNNNQFRQVVIDGVLNQVLNDNIRDGHVINQLMEALMQLSRQQFPTMPVDYKRSIQRGILLLSNRLGQLVDLTRLLAYNYETLMACVTMNMQHVQTLTTEKLQLTSVTSLCMLIGNATVIPSPQTLFHYYNVNVNFHSNYNERINDAVAIITAANRLNLYQKKMKAIVEDFLKRLHIFDVARVPDDQMYRLRDRLRLLPVEVRRLDIFNLILMNMDQIERASDKIAQGVIIAYRDMQLERDEMYGYVNIARNLDGFQQINLEELMRTGDYAQITNMLLNNQPVALVGALPFVTDSSVISLIAKLDATVFAQIVKLRKVDTLKPILYKINSDSNDFYLVANYDWVPTSTTKVYKQVPQQFDFRNSMHMLTSNLTFTVYSDLLAFVSADTVEPINAVAFDNMRIMNEL.

The tract at residues 1–39 (MAYRKRGARREANINNNDRMQEKDDEKQDQNNRMQLSDK) is disordered. Positions 1-80 (MAYRKRGARR…QLLEVLKTKE (80 aa)) are 5-fold hub; involved in the encapsidation of VP1 and VP3. A compositionally biased stretch (basic and acidic residues) spans 19–30 (RMQEKDDEKQDQ). Hydrophobic regions lie at residues 394–414 (LDFVTTNYMSLISGMWLLTVV) and 422–442 (ESLVACQLAIVNTIIYPAFGM).

This sequence belongs to the rotavirus VP2 family. In terms of assembly, homodecamer; each decamer is made up of two conformers of VP2, called VP2A and VP2B. Interacts with a VP1-VP3 complex. Interacts with the intermediate capsid protein VP6. Interacts with NSP5. Interacts (via N-terminus) with NSP2. Sumoylated with SUMO1 and SUMO2. Sumoylation of viral proteins seems to have a positive role on viral replication.

The protein localises to the virion. Functionally, inner capsid protein that self-assembles to form an icosahedral capsid with a T=2 symmetry, which consists of 120 copies of VP2, with channels at each of its five-fold vertices. This capsid constitutes the innermost concentric layer of the viral mature particle. It encapsidates the polymerase VP1, the capping enzyme VP3 and the genomic dsRNA, thereby defining the core. The innermost VP2 capsid and the intermediate VP6 capsid remain intact following cell entry to protect the dsRNA from degradation and to prevent unfavorable antiviral responses in the host cell during all the replication cycle of the virus. Nascent transcripts are transcribed within the structural confines of this double-layered particle (DLP) and are extruded through the channels formed by VP2 N-termini. VP2 is required for the replicase activity of VP1 polymerase. Probably recruits a copy of a VP1-VP3 complex, potentially along with a segment of plus-strand RNA, as a decamer of VP2 assembles. May activate the autoinhibited VP1/RNA complex to coordinate packaging and genome replication. This Rotavirus A (strain RVA/Cow/United States/WC3/1981/G6P7[5]) (RV-A) protein is Inner capsid protein VP2.